A 172-amino-acid polypeptide reads, in one-letter code: Translation initiation factor IF-3 (172 aa).

The protein belongs to the IF-3 family. As to quaternary structure, monomer.

The protein localises to the cytoplasm. Its function is as follows. IF-3 binds to the 30S ribosomal subunit and shifts the equilibrium between 70S ribosomes and their 50S and 30S subunits in favor of the free subunits, thus enhancing the availability of 30S subunits on which protein synthesis initiation begins. The sequence is that of Translation initiation factor IF-3 from Oceanobacillus iheyensis (strain DSM 14371 / CIP 107618 / JCM 11309 / KCTC 3954 / HTE831).